The following is a 392-amino-acid chain: S-adenosylmethionine synthase (392 aa).

His17 contributes to the ATP binding site. Asp19 contacts Mg(2+). Glu45 serves as a coordination point for K(+). L-methionine is bound by residues Glu58 and Gln102. A flexible loop region spans residues 102-112; sequence QSADIAQGVDA. Residues 169-171, 235-236, Asp244, 250-251, Ala267, and Lys271 each bind ATP; these read DAK, KF, and RK. Asp244 is a binding site for L-methionine. Lys275 serves as a coordination point for L-methionine.

Belongs to the AdoMet synthase family. As to quaternary structure, homotetramer; dimer of dimers. Mg(2+) is required as a cofactor. K(+) serves as cofactor.

It is found in the cytoplasm. It carries out the reaction L-methionine + ATP + H2O = S-adenosyl-L-methionine + phosphate + diphosphate. It participates in amino-acid biosynthesis; S-adenosyl-L-methionine biosynthesis; S-adenosyl-L-methionine from L-methionine: step 1/1. Its function is as follows. Catalyzes the formation of S-adenosylmethionine (AdoMet) from methionine and ATP. The overall synthetic reaction is composed of two sequential steps, AdoMet formation and the subsequent tripolyphosphate hydrolysis which occurs prior to release of AdoMet from the enzyme. The chain is S-adenosylmethionine synthase from Methylobacterium nodulans (strain LMG 21967 / CNCM I-2342 / ORS 2060).